The chain runs to 602 residues: DNA damage-binding protein CMR1 (602 aa).

The interval 35-85 is disordered; the sequence is KEVDNKSFSSPSSQKRRKTTKKPVIKKEISEPSRRSRRIAGIKSELEDPKQ. Residues 48 to 58 are compositionally biased toward basic residues; sequence QKRRKTTKKPV. Residues 59 to 68 show a composition bias toward basic and acidic residues; sequence IKKEISEPSR. 6 WD repeats span residues 229–270, 291–328, 390–430, 446–484, 526–569, and 571–602; these read ICHN…NDTK, RNVS…STEL, LHDK…KSVY, NSRL…KLDN, GRWV…LAHL, and EQVG…YLFE.

Belongs to the WD repeat DDB2/WDR76 family.

DNA-binding protein that binds to both single- and double-stranded DNA. Binds preferentially to UV-damaged DNA. May be involved in DNA-metabolic processes. The polypeptide is DNA damage-binding protein CMR1 (Candida albicans (strain SC5314 / ATCC MYA-2876) (Yeast)).